Reading from the N-terminus, the 191-residue chain is NAD(P)H-dependent FMN reductase LOT6 (191 aa).

Residues R11, 94–97 (QYNW), and Y124 each bind FMN.

In terms of assembly, homodimer.

It localises to the cytoplasm. The protein localises to the nucleus. The enzyme catalyses FMNH2 + NADP(+) = FMN + NADPH + 2 H(+). It catalyses the reaction FMNH2 + NAD(+) = FMN + NADH + 2 H(+). In terms of biological role, has several reductase activities that are NAD(P)H-dependent and involve FMN as a cofactor, ferricyanide being the best substrate for reduction. May be involved in ferric iron assimilation. This chain is NAD(P)H-dependent FMN reductase LOT6 (LOT6), found in Saccharomyces cerevisiae (strain ATCC 204508 / S288c) (Baker's yeast).